Reading from the N-terminus, the 296-residue chain is Protoheme IX farnesyltransferase (296 aa).

9 helical membrane-spanning segments follow: residues 8–28 (VTKP…FLLA), 35–55 (YPLF…GCVF), 84–104 (VSLV…YIGA), 107–127 (LAMW…SLYM), 132–152 (VYGT…GYCA), 162–182 (LILL…IAIF), 208–228 (ITVY…GGYA), 229–249 (GYKY…MALR), and 263–283 (LFVF…IDFS).

It belongs to the UbiA prenyltransferase family. Protoheme IX farnesyltransferase subfamily.

It localises to the cell inner membrane. It carries out the reaction heme b + (2E,6E)-farnesyl diphosphate + H2O = Fe(II)-heme o + diphosphate. Its pathway is porphyrin-containing compound metabolism; heme O biosynthesis; heme O from protoheme: step 1/1. Functionally, converts heme B (protoheme IX) to heme O by substitution of the vinyl group on carbon 2 of heme B porphyrin ring with a hydroxyethyl farnesyl side group. The chain is Protoheme IX farnesyltransferase from Serratia proteamaculans (strain 568).